The sequence spans 209 residues: Large ribosomal subunit protein uL4 (209 aa).

A disordered region spans residues 45 to 77 (RQGTHKAKERAEVTGSTRKIKKQKGTGTARAGS).

Belongs to the universal ribosomal protein uL4 family. As to quaternary structure, part of the 50S ribosomal subunit.

In terms of biological role, one of the primary rRNA binding proteins, this protein initially binds near the 5'-end of the 23S rRNA. It is important during the early stages of 50S assembly. It makes multiple contacts with different domains of the 23S rRNA in the assembled 50S subunit and ribosome. Its function is as follows. Forms part of the polypeptide exit tunnel. This Flavobacterium johnsoniae (strain ATCC 17061 / DSM 2064 / JCM 8514 / BCRC 14874 / CCUG 350202 / NBRC 14942 / NCIMB 11054 / UW101) (Cytophaga johnsonae) protein is Large ribosomal subunit protein uL4.